A 424-amino-acid polypeptide reads, in one-letter code: MLDVKKLRSDFEGVKAQLERRNGTIEGLERFSQLDASRRTMIQEVEELKSKRNDVSEQIAALKRDKKDANSLIAEMKQVSERIKEQDEQLRSIETELEALLLTIPNIPQEDVPYGESEEDNREERKWGDVPDFSFEPRPHWELGTALDILDFERAAKVTGSRFTVYKGLGARLERALINFMMDMHATEHDYTEVLPPYIVNRASMIGTGQLPKFEEDVFKISEEDYFLIPTAEVPVTNLHRGEVLQGEQLPIAYNAYSTNFRSEAGSAGRDTRGLIRQHQFNKVELVRFSLPEDSNNQLEIMTTHAENVLKRLGLPYRVVTLCTGDLTFASTKTYDLEVWMPSANTYREISSCSNIGDFQARRANIKFRRDPKSKPEYVHTLNGSGVAVGRTVAAILENYQQEDGSIVIPEALRPYMGNVNILS.

Positions 109–129 (QEDVPYGESEEDNREERKWGD) are disordered. 231–233 (TAE) is an L-serine binding site. 262-264 (RSE) lines the ATP pocket. L-serine is bound at residue glutamate 285. An ATP-binding site is contributed by 349–352 (EISS). L-serine is bound at residue serine 385.

Belongs to the class-II aminoacyl-tRNA synthetase family. Type-1 seryl-tRNA synthetase subfamily. Homodimer. The tRNA molecule binds across the dimer.

The protein localises to the cytoplasm. It catalyses the reaction tRNA(Ser) + L-serine + ATP = L-seryl-tRNA(Ser) + AMP + diphosphate + H(+). The enzyme catalyses tRNA(Sec) + L-serine + ATP = L-seryl-tRNA(Sec) + AMP + diphosphate + H(+). The protein operates within aminoacyl-tRNA biosynthesis; selenocysteinyl-tRNA(Sec) biosynthesis; L-seryl-tRNA(Sec) from L-serine and tRNA(Sec): step 1/1. Its function is as follows. Catalyzes the attachment of serine to tRNA(Ser). Is also able to aminoacylate tRNA(Sec) with serine, to form the misacylated tRNA L-seryl-tRNA(Sec), which will be further converted into selenocysteinyl-tRNA(Sec). The polypeptide is Serine--tRNA ligase (Shouchella clausii (strain KSM-K16) (Alkalihalobacillus clausii)).